Consider the following 225-residue polypeptide: Urease accessory protein UreF (225 aa).

This sequence belongs to the UreF family. UreD, UreF and UreG form a complex that acts as a GTP-hydrolysis-dependent molecular chaperone, activating the urease apoprotein by helping to assemble the nickel containing metallocenter of UreC. The UreE protein probably delivers the nickel.

The protein localises to the cytoplasm. In terms of biological role, required for maturation of urease via the functional incorporation of the urease nickel metallocenter. This Thermosynechococcus vestitus (strain NIES-2133 / IAM M-273 / BP-1) protein is Urease accessory protein UreF.